The sequence spans 161 residues: Arachidonate 5-lipoxygenase-activating protein (161 aa).

The Lumenal segment spans residues 1-8 (MDQEAVGN). A helical membrane pass occupies residues 9-30 (VVLLALVTLISVVQNAFFAHKV). Over 31–52 (EHESKAHNGRSFQRTGTLAFER) the chain is Cytoplasmic. The helical transmembrane segment at 53–77 (VYTANQNCVDAYPTFLVVLWTAGLL) threads the bilayer. Residues 78–80 (CSQ) lie on the Lumenal side of the membrane. The chain crosses the membrane as a helical span at residues 81–102 (VPAAFAGLMYLFVRQKYFVGYL). The Cytoplasmic portion of the chain corresponds to 103–107 (GERTQ). Residues 108 to 115 (STPGYIFG) lie within the membrane without spanning it. Residues 116–128 (KRIILFLFLMSFA) traverse the membrane as a helical segment. The Lumenal segment spans residues 129-161 (GILNHYLIFFFGSDFENYIRTVSTTISPLLLIP).

The protein belongs to the MAPEG family. In terms of assembly, homotrimer. Interacts with LTC4S and ALOX5.

It is found in the nucleus membrane. The protein localises to the endoplasmic reticulum membrane. In terms of biological role, required for leukotriene biosynthesis by ALOX5 (5-lipoxygenase). Anchors ALOX5 to the membrane. Binds arachidonic acid, and could play an essential role in the transfer of arachidonic acid to ALOX5. Binds to MK-886, a compound that blocks the biosynthesis of leukotrienes. This chain is Arachidonate 5-lipoxygenase-activating protein (Alox5ap), found in Mus musculus (Mouse).